The primary structure comprises 259 residues: V-type proton ATPase subunit D (259 aa).

The interval 214-259 is disordered; that stretch reads KLKEQEAAQRALEGPPKEEAGGTHSENQPPRNLLAVEEDNLPVLFN.

Belongs to the V-ATPase D subunit family. As to quaternary structure, V-ATPase is a heteromultimeric enzyme made up of two complexes: the ATP-hydrolytic V1 complex and the proton translocation V0 complex. The V1 complex consists of three catalytic AB heterodimers that form a heterohexamer, three peripheral stalks each consisting of EG heterodimers, one central rotor including subunits D and F, and the regulatory subunits C and H. The proton translocation complex V0 consists of the proton transport subunit a, a ring of proteolipid subunits c9c'', rotary subunit d, and The proton translocation complex V0 consists of the proton transport subunit a, a ring of proteolipid subunits c9c'', rotary subunit d, subunits e and f, and the accessory subunits vah-19/Ac45 and vah-20/PRR.

Its function is as follows. Subunit of the V1 complex of vacuolar(H+)-ATPase (V-ATPase), a multisubunit enzyme composed of a peripheral complex (V1) that hydrolyzes ATP and a membrane integral complex (V0) that translocates protons. V-ATPase is responsible for acidifying and maintaining the pH of intracellular compartments and in some cell types, is targeted to the plasma membrane, where it is responsible for acidifying the extracellular environment. This chain is V-type proton ATPase subunit D, found in Caenorhabditis briggsae.